The following is a 102-amino-acid chain: Protein RnfH (102 aa).

This sequence belongs to the UPF0125 (RnfH) family.

The sequence is that of Protein RnfH from Haemophilus influenzae (strain 86-028NP).